Reading from the N-terminus, the 178-residue chain is GTP-dependent dephospho-CoA kinase (178 aa).

Residues Asp-43, Ile-44, Val-45, Asp-62, Lys-64, and Glu-120 each coordinate GTP.

This sequence belongs to the GTP-dependent DPCK family.

It catalyses the reaction 3'-dephospho-CoA + GTP = GDP + CoA + H(+). It participates in cofactor biosynthesis; coenzyme A biosynthesis. Its function is as follows. Catalyzes the GTP-dependent phosphorylation of the 3'-hydroxyl group of dephosphocoenzyme A to form coenzyme A (CoA). This is GTP-dependent dephospho-CoA kinase from Natronomonas pharaonis (strain ATCC 35678 / DSM 2160 / CIP 103997 / JCM 8858 / NBRC 14720 / NCIMB 2260 / Gabara) (Halobacterium pharaonis).